A 226-amino-acid chain; its full sequence is Leucyl/phenylalanyl-tRNA--protein transferase (226 aa).

This sequence belongs to the L/F-transferase family.

The protein localises to the cytoplasm. The catalysed reaction is N-terminal L-lysyl-[protein] + L-leucyl-tRNA(Leu) = N-terminal L-leucyl-L-lysyl-[protein] + tRNA(Leu) + H(+). It catalyses the reaction N-terminal L-arginyl-[protein] + L-leucyl-tRNA(Leu) = N-terminal L-leucyl-L-arginyl-[protein] + tRNA(Leu) + H(+). The enzyme catalyses L-phenylalanyl-tRNA(Phe) + an N-terminal L-alpha-aminoacyl-[protein] = an N-terminal L-phenylalanyl-L-alpha-aminoacyl-[protein] + tRNA(Phe). Its function is as follows. Functions in the N-end rule pathway of protein degradation where it conjugates Leu, Phe and, less efficiently, Met from aminoacyl-tRNAs to the N-termini of proteins containing an N-terminal arginine or lysine. This Pseudomonas putida (strain W619) protein is Leucyl/phenylalanyl-tRNA--protein transferase.